Consider the following 433-residue polypeptide: N-lysine methyltransferase SMYD2 (433 aa).

The 235-residue stretch at glycine 7–isoleucine 241 folds into the SET domain. Lysine 17–arginine 19 lines the S-adenosyl-L-methionine pocket. The Zn(2+) site is built by cysteine 52, cysteine 55, cysteine 65, cysteine 68, cysteine 74, cysteine 78, histidine 86, and cysteine 90. Residues cysteine 52–cysteine 90 form an MYND-type zinc finger. S-adenosyl-L-methionine is bound by residues histidine 137, asparagine 206–histidine 207, and tyrosine 258–phenylalanine 260. Serine 283 is modified (phosphoserine).

It belongs to the class V-like SAM-binding methyltransferase superfamily. Interacts with RNA polymerase II and HELZ. Interacts with SIN3A and HDAC1. Interacts (via MYND-type zinc finger) with EPB41L3. Interacts (via SET domain) with p53/TP53. Interacts with RB1 and HSP90AA1.

It is found in the cytoplasm. Its subcellular location is the cytosol. The protein resides in the nucleus. It carries out the reaction L-lysyl(4)-[histone H3] + 3 S-adenosyl-L-methionine = N(6),N(6),N(6)-trimethyl-L-lysyl(4)-[histone H3] + 3 S-adenosyl-L-homocysteine + 3 H(+). It catalyses the reaction L-lysyl-[protein] + S-adenosyl-L-methionine = N(6)-methyl-L-lysyl-[protein] + S-adenosyl-L-homocysteine + H(+). Functionally, protein-lysine N-methyltransferase that methylates both histones and non-histone proteins, including p53/TP53 and RB1. Specifically trimethylates histone H3 'Lys-4' (H3K4me3) in vivo. The activity requires interaction with HSP90alpha. Shows even higher methyltransferase activity on p53/TP53. Monomethylates 'Lys-370' of p53/TP53, leading to decreased DNA-binding activity and subsequent transcriptional regulation activity of p53/TP53. Monomethylates RB1 at 'Lys-860'. This chain is N-lysine methyltransferase SMYD2 (SMYD2), found in Homo sapiens (Human).